Reading from the N-terminus, the 237-residue chain is Phosphoadenosine 5'-phosphosulfate reductase (237 aa).

The active-site Nucleophile; cysteine thiosulfonate intermediate is the Cys231.

The protein belongs to the PAPS reductase family. CysH subfamily.

It is found in the cytoplasm. It carries out the reaction [thioredoxin]-disulfide + sulfite + adenosine 3',5'-bisphosphate + 2 H(+) = [thioredoxin]-dithiol + 3'-phosphoadenylyl sulfate. It functions in the pathway sulfur metabolism; hydrogen sulfide biosynthesis; sulfite from sulfate: step 3/3. In terms of biological role, catalyzes the formation of sulfite from phosphoadenosine 5'-phosphosulfate (PAPS) using thioredoxin as an electron donor. This is Phosphoadenosine 5'-phosphosulfate reductase from Xylella fastidiosa (strain M23).